Here is a 478-residue protein sequence, read N- to C-terminus: Protein nucleotidyltransferase YdiU (478 aa).

ATP-binding residues include Gly84, Gly86, Arg87, Lys107, Asp119, Gly120, Arg170, and Arg177. The active-site Proton acceptor is Asp246. Mg(2+) contacts are provided by Asn247 and Asp256. Asp256 is a binding site for ATP.

Belongs to the SELO family. Requires Mg(2+) as cofactor. Mn(2+) serves as cofactor.

The enzyme catalyses L-seryl-[protein] + ATP = 3-O-(5'-adenylyl)-L-seryl-[protein] + diphosphate. It carries out the reaction L-threonyl-[protein] + ATP = 3-O-(5'-adenylyl)-L-threonyl-[protein] + diphosphate. It catalyses the reaction L-tyrosyl-[protein] + ATP = O-(5'-adenylyl)-L-tyrosyl-[protein] + diphosphate. The catalysed reaction is L-histidyl-[protein] + UTP = N(tele)-(5'-uridylyl)-L-histidyl-[protein] + diphosphate. The enzyme catalyses L-seryl-[protein] + UTP = O-(5'-uridylyl)-L-seryl-[protein] + diphosphate. It carries out the reaction L-tyrosyl-[protein] + UTP = O-(5'-uridylyl)-L-tyrosyl-[protein] + diphosphate. Nucleotidyltransferase involved in the post-translational modification of proteins. It can catalyze the addition of adenosine monophosphate (AMP) or uridine monophosphate (UMP) to a protein, resulting in modifications known as AMPylation and UMPylation. This Shigella sonnei (strain Ss046) protein is Protein nucleotidyltransferase YdiU.